The primary structure comprises 802 residues: Outer membrane usher protein CssD (802 aa).

It belongs to the fimbrial export usher family.

The protein localises to the cell outer membrane. Functionally, involved in the export and assembly of C6 fimbrial subunits across the outer membrane. The polypeptide is Outer membrane usher protein CssD (cssD) (Escherichia coli).